Reading from the N-terminus, the 337-residue chain is G-protein coupled receptor 65 (337 aa).

Over 1–5 (MNSTC) the chain is Extracellular. Asparagine 2 carries N-linked (GlcNAc...) asparagine glycosylation. 2 cysteine pairs are disulfide-bonded: cysteine 5–cysteine 160 and cysteine 87–cysteine 170. The chain crosses the membrane as a helical span at residues 6 to 42 (IEEQHDLDHYLFPIVYIFVIIVSIPANIGSLCVSFLQ). Residues 43 to 46 (AKKE) lie on the Cytoplasmic side of the membrane. A helical transmembrane segment spans residues 47–77 (SELGIYLFSLSLSDLLYALTLPLWIDYTWNK). Over 78–82 (DNWTF) the chain is Extracellular. Asparagine 79 carries an N-linked (GlcNAc...) asparagine glycan. A helical transmembrane segment spans residues 83–118 (SPALCKGSAFLMYMNFYSSTAFLTCIAVDRYLAVVY). The Cytoplasmic segment spans residues 119–126 (PLKFFFLR). A helical membrane pass occupies residues 127-153 (TRRFALMVSLSIWILETIFNAVMLWED). Residues 154–174 (ETVVEYCDAEKSNFTLCYDKY) lie on the Extracellular side of the membrane. The extracellular loop 2 (ECL2) stretch occupies residues 154–174 (ETVVEYCDAEKSNFTLCYDKY). An N-linked (GlcNAc...) asparagine glycan is attached at asparagine 166. A helical membrane pass occupies residues 175-212 (PLEKWQINLNLFRTCTGYAIPLVTILICNRKVYQAVRH). The Cytoplasmic portion of the chain corresponds to 213–216 (NKAT). Residues 217–252 (ENKEKKRIIKLLVSITVTFVLCFTPFHVMLLIRCIL) form a helical membrane-spanning segment. Residues 253–264 (EHAVNFEDHSNS) lie on the Extracellular side of the membrane. Residues 265–293 (GKRTYTMYRITVALTSLNCVADPILYCFV) traverse the membrane as a helical segment. The Cytoplasmic segment spans residues 294–337 (TETGRYDMWNILKFCTGRCNTSQRQRKRILSVSTKDTMELEVLE).

The protein belongs to the G-protein coupled receptor 1 family. As to expression, predominantly expressed in thymus, spleen, lymph nodes, small intestine, lung, placenta and peripheral blood leukocytes.

It is found in the cell membrane. The protein resides in the early endosome membrane. Its subcellular location is the late endosome membrane. With respect to regulation, activated by a network of residues that connects an extracellular-facing cavity to Glu-142, a conserved charged residue buried in the transmembrane core of the receptor. Protonation likely drives conformational changes in extracellular loop 2 (ECL2), which stabilizes movement of transmembrane 3 (TM3) and a series of rearrangements that connect the extracellular-facing cavity to Glu-142, a residue only conserved in proton-sensing G-protein coupled receptors. Activated by BTB09089, a positive allosteric modulator. Its function is as follows. Proton-sensing G-protein coupled receptor activated by extracellular pH, which is required to monitor pH changes and generate adaptive reactions. Activated by an optimal pH of 7.4. Ligand binding causes a conformation change that triggers signaling via guanine nucleotide-binding proteins (G proteins) and modulates the activity of downstream effectors, such as adenylate cyclase. GPR65 is mainly coupled to G(s) G proteins and mediates activation of adenylate cyclase activity. May also act as a receptor for the glycosphingolipid psychosine (PSY) and several related glycosphingolipids. Plays a role in immune response by maintaining lysosome function and regulating T-cell metabolism. Acts as a regulator of inflammation by mediating pH-sensing of extracellular acidification which takes place in inflamed tissues: activation regulates endo-lysosomal function of immune cells and T-cell metabolism. Constitutively active in endosomes and stimulates adenylate cyclase production from endosomes independently from extracellular pH changes. The polypeptide is G-protein coupled receptor 65 (Homo sapiens (Human)).